The following is a 302-amino-acid chain: DDRGK domain-containing protein 1 (302 aa).

Over 1–5 the chain is Lumenal; sequence MDGGG. The helical transmembrane segment at 6–26 threads the bilayer; it reads GMLGAVVCLLLVFAIFPLLLW. At 27–302 the chain is on the cytoplasmic side; the sequence is RRRSDAAHRL…DENAAAGTEL (276 aa). Disordered regions lie at residues 36-151 and 279-302; these read LPPQ…EEAR and DLEP…GTEL. Over residues 79 to 91 the composition is skewed to acidic residues; sequence VDDADSDLEEEIQ. Residues 103 to 151 show a composition bias toward basic and acidic residues; that stretch reads KRQDREAQRQAEEAARDSRRTKQDRYAEMRRKKDEEREAQERLMEEEAR.

The protein belongs to the DDRGK1 family.

It is found in the endoplasmic reticulum membrane. Functionally, substrate adapter for ufmylation, the covalent attachment of the ubiquitin-like modifier UFM1 to substrate proteins. The sequence is that of DDRGK domain-containing protein 1 from Oryza sativa subsp. japonica (Rice).